Consider the following 119-residue polypeptide: MTAVEIIISIFVLIGGFLSLLGSIGIIRFPDVYGRLHAATKSATLGVISIMLATFLFFFLVHGEFVGKLLLTILFVFLTAPVAGMMMGRSAYRVGVPLWEKSTQDDLKKMYEKKMKGSN.

Transmembrane regions (helical) follow at residues 7–29 (IISI…IIRF), 44–61 (TLGV…FFLV), and 66–88 (VGKL…MMMG).

This sequence belongs to the CPA3 antiporters (TC 2.A.63) subunit G family. As to quaternary structure, forms a heterooligomeric complex that consists of seven subunits: MrpA, MrpB, MrpC, MrpD, MrpE, MrpF and MrpG.

Its subcellular location is the cell membrane. Its function is as follows. Mnh complex is a Na(+)Li(+)/H(+) antiporter involved in Na(+) and/or Li(+) excretion and Na(+) resistance. Na(+)/H(+) antiport consumes a transmembrane electrical potential, and is thus inferred to be electrogenic. Does not transport K(+), Ca(2+) or Mg(2+). The protein is Na(+)/H(+) antiporter subunit G (mrpG) of Alkalihalophilus pseudofirmus (strain ATCC BAA-2126 / JCM 17055 / OF4) (Bacillus pseudofirmus).